An 82-amino-acid polypeptide reads, in one-letter code: Large ribosomal subunit protein uL29 (82 aa).

This sequence belongs to the universal ribosomal protein uL29 family.

The sequence is that of Large ribosomal subunit protein uL29 from Trichodesmium erythraeum (strain IMS101).